Consider the following 561-residue polypeptide: Methionine--tRNA ligase (561 aa).

The 'HIGH' region motif lies at 11 to 21 (PYVNTVPHLGN). 4 residues coordinate Zn(2+): C143, C146, C156, and C159. An ATP-binding site is contributed by K334.

It belongs to the class-I aminoacyl-tRNA synthetase family. MetG type 1 subfamily. Zn(2+) serves as cofactor.

It is found in the cytoplasm. The enzyme catalyses tRNA(Met) + L-methionine + ATP = L-methionyl-tRNA(Met) + AMP + diphosphate. In terms of biological role, is required not only for elongation of protein synthesis but also for the initiation of all mRNA translation through initiator tRNA(fMet) aminoacylation. In Ignicoccus hospitalis (strain KIN4/I / DSM 18386 / JCM 14125), this protein is Methionine--tRNA ligase.